A 360-amino-acid polypeptide reads, in one-letter code: GTPase Obg (360 aa).

Residues 1–156 (MFVDSVEIII…KCVRLELKLI (156 aa)) form the Obg domain. One can recognise an OBG-type G domain in the interval 157–360 (ADIGLVGFPN…LKFVLLEALP (204 aa)). GTP is bound by residues 163–170 (GFPNAGKS), 188–192 (FTTLV), 210–213 (DIPG), 279–282 (NKCD), and 341–343 (SAV). The Mg(2+) site is built by S170 and T190.

This sequence belongs to the TRAFAC class OBG-HflX-like GTPase superfamily. OBG GTPase family. Monomer. Mg(2+) is required as a cofactor.

It is found in the cytoplasm. An essential GTPase which binds GTP, GDP and possibly (p)ppGpp with moderate affinity, with high nucleotide exchange rates and a fairly low GTP hydrolysis rate. Plays a role in control of the cell cycle, stress response, ribosome biogenesis and in those bacteria that undergo differentiation, in morphogenesis control. The protein is GTPase Obg of Helicobacter pylori (strain ATCC 700392 / 26695) (Campylobacter pylori).